A 319-amino-acid chain; its full sequence is N-acyl-aromatic-L-amino acid amidohydrolase (carboxylate-forming) (319 aa).

The interval 1–210 is hydrolytic domain; that stretch reads MCSLPVPREP…TVLDFIELFN (210 aa). 2 residues coordinate Zn(2+): H21 and E24. Substrate is bound by residues R63 and 70 to 71; that span reads NR. Position 116 (H116) interacts with Zn(2+). Substrate contacts are provided by E178 and Y288. Positions 211–318 are shielding domain; that stretch reads QGTAFPAFEM…PALTPAPSPA (108 aa).

Belongs to the AspA/AstE family. Aspartoacylase subfamily. Exists as a mixture of homodimers and homotetramer, both catalytically active. In terms of assembly, (Microbial infection) Interacts with hepatitis C virus/HCV core protein. It depends on Zn(2+) as a cofactor.

It is found in the apical cell membrane. Its subcellular location is the cytoplasm. It carries out the reaction an N-acyl-aromatic L-alpha-amino acid + H2O = an aromatic L-alpha-amino acid + a carboxylate. The catalysed reaction is an N-acetyl-L-cysteine-S-conjugate + H2O = an S-substituted L-cysteine + acetate. Functionally, plays an important role in deacetylating mercapturic acids in kidney proximal tubules. Also acts on N-acetyl-aromatic amino acids. The polypeptide is N-acyl-aromatic-L-amino acid amidohydrolase (carboxylate-forming) (ACY3) (Homo sapiens (Human)).